Consider the following 421-residue polypeptide: Putative aspartate aminotransferase, cytoplasmic 2 (421 aa).

Residue Lys-249 is modified to N6-(pyridoxal phosphate)lysine.

The protein belongs to the class-I pyridoxal-phosphate-dependent aminotransferase family. In terms of assembly, homodimer. Requires pyridoxal 5'-phosphate as cofactor.

Its subcellular location is the cytoplasm. It carries out the reaction L-aspartate + 2-oxoglutarate = oxaloacetate + L-glutamate. This is Putative aspartate aminotransferase, cytoplasmic 2 (GOT1L1) from Homo sapiens (Human).